Here is a 96-residue protein sequence, read N- to C-terminus: Large ribosomal subunit protein uL23 (96 aa).

This sequence belongs to the universal ribosomal protein uL23 family. In terms of assembly, part of the 50S ribosomal subunit. Contacts protein L29, and trigger factor when it is bound to the ribosome.

Functionally, one of the early assembly proteins it binds 23S rRNA. One of the proteins that surrounds the polypeptide exit tunnel on the outside of the ribosome. Forms the main docking site for trigger factor binding to the ribosome. This Nitratidesulfovibrio vulgaris (strain ATCC 29579 / DSM 644 / CCUG 34227 / NCIMB 8303 / VKM B-1760 / Hildenborough) (Desulfovibrio vulgaris) protein is Large ribosomal subunit protein uL23.